A 456-amino-acid chain; its full sequence is tRNA-2-methylthio-N(6)-dimethylallyladenosine synthase (456 aa).

The MTTase N-terminal domain maps to 1–116; the sequence is MTYFFETYGC…FESIFQEIEQ (116 aa). The [4Fe-4S] cluster site is built by C10, C46, C79, C162, C166, and C169. Positions 148 to 384 constitute a Radical SAM core domain; it reads SEGSFQSFIP…IALQMSTTLK (237 aa). A TRAM domain is found at 387–452; it reads RARVGKTLPV…GRTLRAHLVQ (66 aa).

It belongs to the methylthiotransferase family. MiaB subfamily. Monomer. [4Fe-4S] cluster is required as a cofactor.

It is found in the cytoplasm. It catalyses the reaction N(6)-dimethylallyladenosine(37) in tRNA + (sulfur carrier)-SH + AH2 + 2 S-adenosyl-L-methionine = 2-methylsulfanyl-N(6)-dimethylallyladenosine(37) in tRNA + (sulfur carrier)-H + 5'-deoxyadenosine + L-methionine + A + S-adenosyl-L-homocysteine + 2 H(+). Catalyzes the methylthiolation of N6-(dimethylallyl)adenosine (i(6)A), leading to the formation of 2-methylthio-N6-(dimethylallyl)adenosine (ms(2)i(6)A) at position 37 in tRNAs that read codons beginning with uridine. The sequence is that of tRNA-2-methylthio-N(6)-dimethylallyladenosine synthase from Treponema pallidum (strain Nichols).